The chain runs to 715 residues: Polyribonucleotide nucleotidyltransferase (715 aa).

2 residues coordinate Mg(2+): aspartate 498 and aspartate 504. The KH domain maps to 565–625; it reads PKVCMMQIKP…ETVKKTVAFI (61 aa). The region spanning 635–709 is the S1 motif domain; sequence GTCYQASILR…RIDFLLLPKK (75 aa).

The protein belongs to the polyribonucleotide nucleotidyltransferase family. Mg(2+) serves as cofactor.

It is found in the cytoplasm. The catalysed reaction is RNA(n+1) + phosphate = RNA(n) + a ribonucleoside 5'-diphosphate. Functionally, involved in mRNA degradation. Catalyzes the phosphorolysis of single-stranded polyribonucleotides processively in the 3'- to 5'-direction. The protein is Polyribonucleotide nucleotidyltransferase of Aster yellows witches'-broom phytoplasma (strain AYWB).